A 760-amino-acid polypeptide reads, in one-letter code: Cyclin-D-binding Myb-like transcription factor 1 (760 aa).

The interval 1 to 237 (MSTVEEDSDT…TPEEIEKLKE (237 aa)) is interaction with CCND2. A required for transcriptional activation region spans residues 87–170 (VTMTATTEVA…IDILMNNIER (84 aa)). The required for DNA-binding stretch occupies residues 87-458 (VTMTATTEVA…DNTAISSSPM (372 aa)). The interaction with CCND1, CCND2 and CCND3 stretch occupies residues 176-760 (GIKDATEIIF…KDVEDLVNCH (585 aa)). The Myb-like 1 domain occupies 225–263 (GKYTPEEIEKLKELRIKHGNDWATIGAALGRSASSVKDR). One can recognise an HTH myb-type domain in the interval 268-333 (KDTCNTGKWT…KWLNYLNWKQ (66 aa)). The segment at residues 306-329 (WAAVAERVGTRSEKQCRSKWLNYL) is a DNA-binding region (H-T-H motif). One can recognise a Myb-like 2 domain in the interval 339–388 (WTKEDEINLILRIAELDVADENDINWDLLAEGWSSVRSPQWLRSKWWTIK). Disordered regions lie at residues 414 to 435 (KNNP…NTNS) and 738 to 760 (IGSS…VNCH). The tract at residues 459–760 (AALQIPVQIT…KDVEDLVNCH (302 aa)) is required for transcriptional activation.

It belongs to the DMTF1 family. As to quaternary structure, interacts with the D-type cyclins CCND1, CCND2 and CCND3. Interaction with D-type cyclins may modulate transcriptional activation by this protein. In terms of processing, phosphorylated by the cyclin-D2/CDK4, cyclin-D3/CDK4 and cyclin-D2/CDK6 complexes and to a lesser extent by the cyclin-D1/CDK4 complex. In terms of tissue distribution, expressed at relatively low levels in colonic mucosa, ovary, peripheral leukocytes, prostate and small intestine, and at higher levels in spleen, testis and thymus. Expressed in multiple regions of the brain and CNS including amygdala, caudate, corpus callosum, hippocampus, substantia nigra and subthalamic nucleus. Isoform 1 is the predominant isoform in monocytes, macrophages and neutrophils, isoform 2 is most strongly expressed in peripheral blood leukocytes and quiescent CD34 positive cells, and isoform 3 is expressed at low levels in all hematopoietic cell types. Expression is frequently reduced in non-small-cell lung carcinomas (NSCLC) due to hemizygous gene deletion, strongly suggesting that this locus is haploinsufficient for tumor suppression. Loss of this locus frequently occurs in tumors which retain wild-type CDKN2A/ARF and p53/TP53 loci. Hemizygous gene deletion has also been observed in leukemic blasts from patients with abnormalities of the long arm of chromosome 7.

It is found in the nucleus. Functionally, transcriptional activator which activates the CDKN2A/ARF locus in response to Ras-Raf signaling, thereby promoting p53/TP53-dependent growth arrest. Binds to the consensus sequence 5'-CCCG[GT]ATGT-3'. Isoform 1 may cooperate with MYB to activate transcription of the ANPEP gene. Isoform 2 may antagonize transcriptional activation by isoform 1. In Homo sapiens (Human), this protein is Cyclin-D-binding Myb-like transcription factor 1 (DMTF1).